Here is a 102-residue protein sequence, read N- to C-terminus: Small ribosomal subunit protein uS10 (102 aa).

Belongs to the universal ribosomal protein uS10 family. As to quaternary structure, part of the 30S ribosomal subunit.

Its function is as follows. Involved in the binding of tRNA to the ribosomes. The polypeptide is Small ribosomal subunit protein uS10 (Bacillus cereus (strain ATCC 10987 / NRS 248)).